The primary structure comprises 147 residues: MGVRLVVHYRLPASSMDYVQETGRAGRDGKYAIAALFYEKYDSTWSSYVEDSMKNFLNDNTMCVRSFLASEMDGECVCYSLLGEESTVSTMYGVKPTLPETPKPAIATHSRYNASFSSSPPPQPGSSSGMSAMNTNTTSTTPVSGKT.

The 72-residue stretch at 1-72 (MGVRLVVHYR…CVRSFLASEM (72 aa)) folds into the Helicase C-terminal domain. Residues 100 to 147 (ETPKPAIATHSRYNASFSSSPPPQPGSSSGMSAMNTNTTSTTPVSGKT) are disordered. Over residues 125 to 141 (GSSSGMSAMNTNTTSTT) the composition is skewed to low complexity.

It belongs to the helicase family. RecQ subfamily.

In terms of biological role, truncated ATP-dependent 3'-5' DNA helicase. The sequence is that of Truncated RecQ DNA helicase-like protein C212.06c from Schizosaccharomyces pombe (strain 972 / ATCC 24843) (Fission yeast).